The primary structure comprises 1103 residues: DNA polymerase delta catalytic subunit (1103 aa).

Positions 1 to 29 (MDFKRRQGPGPGVPPKRARGGLWDEDEPS) are disordered. Positions 4-19 (KRRQGPGPGVPPKRAR) match the Nuclear localization signal motif. Arg19 carries the omega-N-methylarginine modification. A Glycyl lysine isopeptide (Lys-Gly) (interchain with G-Cter in SUMO2) cross-link involves residue Lys570. Positions 1008, 1011, 1022, and 1025 each coordinate Zn(2+). A CysA-type zinc finger spans residues 1008 to 1025 (CIGCRSVINHQGAVCEFC). Cys1054, Cys1057, Cys1067, and Cys1072 together coordinate [4Fe-4S] cluster. The CysB motif signature appears at 1054-1072 (CQRCQGSLHEDVICTSRDC).

It belongs to the DNA polymerase type-B family. As to quaternary structure, component of the tetrameric DNA polymerase delta complex (Pol-delta4), which consists of POLD1/p125, POLD2/p50, POLD3/p66/p68 and POLD4/p12, with POLD1 bearing both DNA polymerase and 3' to 5' proofreading exonuclease activities. Within Pol-delta4, directly interacts with POLD2 and POLD4. Following genotoxic stress by DNA-damaging agents, such as ultraviolet light and methyl methanesulfonate, or by replication stress induced by treatment with hydroxyurea or aphidicolin, Pol-delta4 is converted into a trimeric form of the complex (Pol-delta3) by POLD4 degradation. Pol-delta3 is the major form at S phase replication sites and DNA damage sites. POLD1 displays different catalytic properties depending upon the complex it is found in. It exhibits higher proofreading activity and fidelity than Pol-delta4, making it particularly well suited to respond to DNA damage. Directly interacts with PCNA, as do POLD3 and POLD4; this interaction stimulates Pol-delta4 polymerase activity. As POLD2 and POLD4, directly interacts with WRNIP1; this interaction stimulates DNA polymerase delta-mediated DNA synthesis, independently of the presence of PCNA. This stimulation may be due predominantly to an increase of initiation frequency and also to increased processivity. Also observed as a dimeric complex with POLD2 (Pol-delta2). Pol-delta2 is relatively insensitive to the PCNA stimulation (2-5-fold) compared to Pol-delta4 that is stimulated by over 50-fold. The DNA polymerase delta complex interacts with POLDIP2; this interaction is probably mediated through direct binding to POLD2. Interacts with CIAO1. Interacts with POLDIP2. Interacts with RFC1. [4Fe-4S] cluster is required as a cofactor.

It localises to the nucleus. The catalysed reaction is DNA(n) + a 2'-deoxyribonucleoside 5'-triphosphate = DNA(n+1) + diphosphate. Regulated by alteration of quaternary structure. Exhibits burst rates of DNA synthesis are about 5 times faster in the presence of POLD4 (Pol-delta4 complex) than in its absence (Pol-delta3 complex), while the affinity of the enzyme for its DNA and dNTP substrates appears unchanged. The Pol-delta3 complex is more likely to proofread DNA synthesis because it cleaves single-stranded DNA twice as fast and transfers mismatched DNA from the polymerase to the exonuclease sites 9 times faster compared to the Pol-delta3 complex. Pol-delta3 also extends mismatched primers 3 times more slowly in the absence of POLD4. The conversion of Pol-delta4 into Pol-delta3 is induced by genotoxic stress or by replication stress leading POLD4 degradation. Stimulated in the presence of PCNA. This stimulation is further increased in the presence of KCTD13/PDIP1, most probably via direct interaction between KCTD13 and POLD2. In terms of biological role, as the catalytic component of the trimeric (Pol-delta3 complex) and tetrameric DNA polymerase delta complexes (Pol-delta4 complex), plays a crucial role in high fidelity genome replication, including in lagging strand synthesis, and repair. Exhibits both DNA polymerase and 3'- to 5'-exonuclease activities. Requires the presence of accessory proteins POLD2, POLD3 and POLD4 for full activity. Depending upon the absence (Pol-delta3) or the presence of POLD4 (Pol-delta4), displays differences in catalytic activity. Most notably, expresses higher proofreading activity in the context of Pol-delta3 compared with that of Pol-delta4. Although both Pol-delta3 and Pol-delta4 process Okazaki fragments in vitro, Pol-delta3 may be better suited to fulfill this task, exhibiting near-absence of strand displacement activity compared to Pol-delta4 and stalling on encounter with the 5'-blocking oligonucleotides. Pol-delta3 idling process may avoid the formation of a gap, while maintaining a nick that can be readily ligated. Along with DNA polymerase kappa, DNA polymerase delta carries out approximately half of nucleotide excision repair (NER) synthesis following UV irradiation. Under conditions of DNA replication stress, in the presence of POLD3 and POLD4, may catalyze the repair of broken replication forks through break-induced replication (BIR). Involved in the translesion synthesis (TLS) of templates carrying O6-methylguanine, 8oxoG or abasic sites. This chain is DNA polymerase delta catalytic subunit (POLD1), found in Mesocricetus auratus (Golden hamster).